Reading from the N-terminus, the 2219-residue chain is E3 ubiquitin-protein ligase Ubr3 (2219 aa).

Disordered stretches follow at residues methionine 1–serine 48 and alanine 78–serine 134. Over residues valine 20 to methionine 29 the composition is skewed to basic and acidic residues. Acidic residues predominate over residues glutamate 31 to serine 42. Residues glycine 114–serine 134 are compositionally biased toward low complexity. A UBR-type zinc finger spans residues alanine 222 to isoleucine 293. Disordered stretches follow at residues serine 1348–valine 1367 and glutamine 1440–glutamate 1464. The span at aspartate 1353–valine 1367 shows a compositional bias: acidic residues. The segment at cysteine 1607–arginine 1643 adopts an RING-type; degenerate zinc-finger fold. 2 disordered regions span residues valine 1872–glutamine 1902 and serine 1935–serine 1954. Low complexity predominate over residues serine 1877 to alanine 1888.

This sequence belongs to the E3 ubiquitin-protein ligase UBR1-like family. As to quaternary structure, selectively interacts (via UBR-type zinc finger) with the cleaved form of Diap1; this interaction is enhanced by tal. Interacts with tal and Rrp1. Interacts with ovo isoform B (via N-terminus). Interacts with Cad99C (via the cytoplasmic domain). Interacts with ck and Sans. Interacts with cos (via Kinesin motor domain). Post-translationally, in vitro, self-ubiquitination in the presence of E1, E2 and ubiquitin.

Its subcellular location is the cytoplasm. The protein resides in the nucleus. It catalyses the reaction S-ubiquitinyl-[E2 ubiquitin-conjugating enzyme]-L-cysteine + [acceptor protein]-L-lysine = [E2 ubiquitin-conjugating enzyme]-L-cysteine + N(6)-ubiquitinyl-[acceptor protein]-L-lysine.. Its pathway is protein modification; protein ubiquitination. In terms of biological role, E3 ubiquitin-protein ligase which is a component of the N-end rule pathway. Recognizes and binds to proteins bearing specific N-terminal residues, leading to their ubiquitination and subsequent degradation. Binds to the E3 ubiquitin-protein ligase Diap1 and enhances its ubiquitination and anti-apoptotic functions. Essential during trichome development for the ubiquitination of the N-terminus of ovo isoform B (svb), converting it from a transcriptional inhibitor to an activator. Positively regulates a hh-signaling pathway which functions in photoreceptor differentiation. Activation of hh up-regulates transcription of Ubr3, which in turn promotes hh signaling by mediating the ubiquitination and degradation of cos. Necessary for auditory transduction: plays a role in Johnston's organ organization by acting in the regulation of zip and ck function in scolopidial apical attachment. Likely to function by acting in a pathway that negatively regulates the ubiquitination of zip, consequently affecting its interaction with ck. May also negatively regulate a component of the SCF (SKP1-CUL1-F-box protein) E3 ubiquitin-protein ligase complex Cul1, which also appears to function in the negative regulation of the zip-ck interaction and scolopidial apical attachment. This is E3 ubiquitin-protein ligase Ubr3 from Drosophila melanogaster (Fruit fly).